Consider the following 401-residue polypeptide: Glucose-6-phosphate isomerase (401 aa).

The active-site Proton donor is the Glu261. Residues His282 and Lys392 contribute to the active site.

This sequence belongs to the GPI family. As to quaternary structure, homodimer.

It localises to the cytoplasm. It carries out the reaction alpha-D-glucose 6-phosphate = beta-D-fructose 6-phosphate. It functions in the pathway carbohydrate biosynthesis; gluconeogenesis. It participates in carbohydrate degradation; glycolysis; D-glyceraldehyde 3-phosphate and glycerone phosphate from D-glucose: step 2/4. Competively inhibited by 6-phosphogluconate and erythrose 4-phosphate. In terms of biological role, catalyzes the isomerization of glucose-6-P to fructose-6-P. This Methanocaldococcus jannaschii (strain ATCC 43067 / DSM 2661 / JAL-1 / JCM 10045 / NBRC 100440) (Methanococcus jannaschii) protein is Glucose-6-phosphate isomerase.